The chain runs to 549 residues: MKMFCYQCQEALKNTGCTTIGVCGKTADVANLQDLLIFTLKGISFLNLKAREVGVNKEKTDRFLIEGLFSTITNVNFDRNFFLRKIKEAVALRDEIKEDLRNKGVRVDEYKNIDAISWTYGTDADIEAISQEVGVLSTEDEDIRSLRELITYGVKGMAAYAYHAYQLGYKDDNIFKFMEKALAKVLDDSLTVDDYVALAMETGKYGVDTMALLDKANTSTYGHPEITKVNIGVRNNPGILVSGHDLKDLEQLLEQTAGTGVDVYTHGEMLPAHYYPAFKKYPHFVGNYGNAWWQQDKEFELFNGPILMTTNCLIPPKDSYKDRVYTTGVVGFEGVKYIPEGPDGKKDFSEIIEHAKRCKPPVEIERGEIIGGFAHNQVLQLADKIVEAVKTGAIKRFFVMAGCDGRMKSRTYYTEFAKALPKDTVILTAGCAKYRYNKLNLGDIDGIPRVLDAGQCNDSYSLAVIAMKLKEIFGLNDINELPISYNIAWYEQKAVIVLLALLYLGVKNIHLGPTLPAFLSPNVTKVLVEKFGIGGITNVEDDLKMFLGA.

The [4Fe-4S] cluster site is built by Cys5, Cys8, Cys17, and Cys23. Hybrid [4Fe-2O-2S] cluster is bound by residues His244, Glu268, Cys312, Cys403, Cys431, Cys456, Glu491, and Lys493. Cys403 is modified (cysteine persulfide).

It belongs to the HCP family. It depends on [4Fe-4S] cluster as a cofactor. Requires hybrid [4Fe-2O-2S] cluster as cofactor.

Its subcellular location is the cytoplasm. The catalysed reaction is A + NH4(+) + H2O = hydroxylamine + AH2 + H(+). Its function is as follows. Catalyzes the reduction of hydroxylamine to form NH(3) and H(2)O. The polypeptide is Hydroxylamine reductase (Caldanaerobacter subterraneus subsp. tengcongensis (strain DSM 15242 / JCM 11007 / NBRC 100824 / MB4) (Thermoanaerobacter tengcongensis)).